The following is a 432-amino-acid chain: Adenosylhomocysteinase (432 aa).

Positions 1-24 are disordered; that stretch reads MSAYSPLSAQLDADTDVDVESTRT. Residues Asp-137 and Glu-162 each coordinate substrate. NAD(+) is bound at residue 163 to 165; that stretch reads TTT. Substrate is bound by residues Lys-192 and Asp-196. Residues Asn-197, 226 to 231, Glu-249, Asn-284, 305 to 307, and Asn-352 each bind NAD(+); these read GYGYCG and AGH.

This sequence belongs to the adenosylhomocysteinase family. The cofactor is NAD(+).

It is found in the cytoplasm. It carries out the reaction S-adenosyl-L-homocysteine + H2O = L-homocysteine + adenosine. Its pathway is amino-acid biosynthesis; L-homocysteine biosynthesis; L-homocysteine from S-adenosyl-L-homocysteine: step 1/1. Functionally, may play a key role in the regulation of the intracellular concentration of adenosylhomocysteine. This is Adenosylhomocysteinase from Haloquadratum walsbyi (strain DSM 16854 / JCM 12705 / C23).